The following is a 314-amino-acid chain: tRNA dimethylallyltransferase (314 aa).

Residue 12–19 participates in ATP binding; that stretch reads GPTAGGKS. Residue 14–19 coordinates substrate; it reads TAGGKS. The interval 37–40 is interaction with substrate tRNA; that stretch reads DSMQ.

The protein belongs to the IPP transferase family. As to quaternary structure, monomer. It depends on Mg(2+) as a cofactor.

It catalyses the reaction adenosine(37) in tRNA + dimethylallyl diphosphate = N(6)-dimethylallyladenosine(37) in tRNA + diphosphate. Its function is as follows. Catalyzes the transfer of a dimethylallyl group onto the adenine at position 37 in tRNAs that read codons beginning with uridine, leading to the formation of N6-(dimethylallyl)adenosine (i(6)A). This chain is tRNA dimethylallyltransferase, found in Rhodospirillum centenum (strain ATCC 51521 / SW).